Here is a 359-residue protein sequence, read N- to C-terminus: 5-amino-6-(D-ribitylamino)uracil--L-tyrosine 4-hydroxyphenyl transferase 1 (359 aa).

In terms of domain architecture, Radical SAM core spans 45-282 (VTYVVNANIN…VYAISRIFFK (238 aa)). [4Fe-4S] cluster contacts are provided by Cys59, Cys63, and Cys66.

This sequence belongs to the radical SAM superfamily. CofH family. As to quaternary structure, consists of two subunits, CofG and CofH. The cofactor is [4Fe-4S] cluster.

The enzyme catalyses 5-amino-6-(D-ribitylamino)uracil + L-tyrosine + S-adenosyl-L-methionine = 5-amino-5-(4-hydroxybenzyl)-6-(D-ribitylimino)-5,6-dihydrouracil + 2-iminoacetate + 5'-deoxyadenosine + L-methionine + H(+). It participates in cofactor biosynthesis; coenzyme F0 biosynthesis. Functionally, catalyzes the radical-mediated synthesis of 5-amino-5-(4-hydroxybenzyl)-6-(D-ribitylimino)-5,6-dihydrouracil from 5-amino-6-(D-ribitylamino)uracil and L-tyrosine. This chain is 5-amino-6-(D-ribitylamino)uracil--L-tyrosine 4-hydroxyphenyl transferase 1, found in Methanococcus maripaludis (strain DSM 14266 / JCM 13030 / NBRC 101832 / S2 / LL).